Reading from the N-terminus, the 957-residue chain is Mediator of RNA polymerase II transcription subunit 16 (957 aa).

The interval 855-883 (YTEVDAAPSGKTNAQGPPQQPQPQQQRRR) is disordered.

This sequence belongs to the Mediator complex subunit 16 family. In terms of assembly, component of the Mediator complex.

It localises to the nucleus. Component of the Mediator complex, a coactivator involved in the regulated transcription of nearly all RNA polymerase II-dependent genes. Mediator functions as a bridge to convey information from gene-specific regulatory proteins to the basal RNA polymerase II transcription machinery. Mediator is recruited to promoters by direct interactions with regulatory proteins and serves as a scaffold for the assembly of a functional preinitiation complex with RNA polymerase II and the general transcription factors. This chain is Mediator of RNA polymerase II transcription subunit 16 (sin4), found in Aspergillus clavatus (strain ATCC 1007 / CBS 513.65 / DSM 816 / NCTC 3887 / NRRL 1 / QM 1276 / 107).